Consider the following 154-residue polypeptide: UPF0225 protein YE2246 (154 aa).

Belongs to the UPF0225 family.

The chain is UPF0225 protein YE2246 from Yersinia enterocolitica serotype O:8 / biotype 1B (strain NCTC 13174 / 8081).